The chain runs to 158 residues: Protein BTG2 (158 aa).

At serine 147 the chain carries Phosphoserine; by MAPK1 and MAPK3. Serine 149 carries the post-translational modification Phosphoserine; by MAPK14.

Belongs to the BTG family. Interacts with PRKCABP. Interacts with CNOT7 and CNOT8; indicative for an association with the CCR4-NOT complex. Interacts with PIN1, inducing mitochondrial depolarization. In terms of processing, phosphorylated at Ser-147 by MAPK1/ERK2 and MAPK3/ERK1, and at Ser-149 by MAPK14, leading to PIN1-binding and mitochondrial depolarization.

Anti-proliferative protein; the function is mediated by association with deadenylase subunits of the CCR4-NOT complex. Activates mRNA deadenylation in a CNOT6 and CNOT7-dependent manner. In vitro can inhibit deadenylase activity of CNOT7 and CNOT8. Involved in cell cycle regulation. Could be involved in the growth arrest and differentiation of the neuronal precursors. Modulates transcription regulation mediated by ESR1. Involved in mitochondrial depolarization and neurite outgrowth. This is Protein BTG2 (BTG2) from Homo sapiens (Human).